We begin with the raw amino-acid sequence, 864 residues long: Dynamin-1 (864 aa).

In terms of domain architecture, Dynamin-type G spans 28 to 294 (DLDLPQIAVV…LTNHIRDTLP (267 aa)). The G1 motif stretch occupies residues 38–45 (GGQSAGKS). GDP is bound by residues Ser-41, Gly-43, Lys-44, Ser-45, Ser-46, Arg-59, and Gly-60. Residues 64–66 (VTR) are G2 motif. The residue at position 80 (Tyr-80) is a Phosphotyrosine. 3'-nitrotyrosine; alternate is present on Tyr-125. Phosphotyrosine; alternate is present on Tyr-125. A G3 motif region spans residues 136-139 (DLPG). The interval 205-208 (TKLD) is G4 motif. The GDP site is built by Lys-206, Asp-208, Asp-211, Asn-236, Arg-237, and Gln-239. Residues 235–238 (VNRS) are G5 motif. Ser-306 and Ser-347 each carry phosphoserine. Tyr-354 is subject to Phosphotyrosine. Position 512 is a phosphoserine (Ser-512). Residues 519-625 (LVIRKGWLTI…WKASFLRAGV (107 aa)) enclose the PH domain. One can recognise a GED domain in the interval 659 to 750 (VETIRNLVDS…IIGDINTTTV (92 aa)). Residues 767–864 (SVPAGRRSPT…PESPRPPFDL (98 aa)) form a disordered region. Residue Ser-774 is modified to Phosphoserine; by GSK3-beta. Phosphoserine is present on Ser-778. An Omega-N-methylarginine modification is found at Arg-796. The residue at position 822 (Ser-822) is a Phosphoserine. Pro residues predominate over residues 825-843 (PFGPPPQVPSRPNRAPPGV). Ser-851 and Ser-857 each carry phosphoserine.

It belongs to the TRAFAC class dynamin-like GTPase superfamily. Dynamin/Fzo/YdjA family. Homodimer; homodimerization is mediated by the dynamin-type G domain which promotes assembly-stimulated GTPase activity. Homo-tetramer formed from two dimers in the absence of lipid. Oligomerizes into a helical polymer that self-assembles around the vesicle membrane, when associated to the menbrane through lipid binding. Interacts (via C-terminal proline-rich domain (PRD)) with SNX9 (via SH3 domain); this interaction allows regulation of DNM1 self-assembly during late stages of endocytic vesicle formation and supports DNM1's early functions in accelerating clathrin-coated pits (CCPs) maturation in non neuronals cell. Interacts (via C-terminal proline-rich domain (PRD)) with MYO1E (via SH3 domain); this interaction regulates receptor-mediated endocytosis. Interacts with SNX33 (via SH3 domain); this interaction decreases DNM1-dependent endocytosis. Interacts with DIAPH1. Interacts with GRB2 (via SH3 domain); this interaction mediates disassembly of DNM1 polymers, therefore modulates self-assembly. Forms a complex with BIN1 (via SH3 domain) and SH3GL2 (via SH3 domain). Forms a complex with SH3GL2 (via SH3 domain) and AMPH (via SH3 domain). Forms a complex with SH3GL2 (via SH3 domain) and SYNJ1. Interacts with AMPH. Interacts (via C-terminal proline-rich domain (PRD)) with SYT1; this interaction facilitates vesicle fission during clathrin-mediated endocytosis (CME). Interacts (via C-terminal proline-rich domain (PRD)) with PLCG1 (via SH3 domain); this interaction stimulates the release of GDP from DNM1 and enhances DNM1-dependent endocytosis. Interacts with SNPH; this interaction inhibits the binding of DNM1 to AMPH and DNM1-receptor-mediated endocytosis. Interacts with CAV1. Interacts with SH3GLB1 (via SH3 domain). Interacts with PACSIN1 (via SH3 domain), PACSIN2 (via SH3 domain) and PACSIN3 (via SH3 domain). Interacts with UNC119; this interaction decreases DNM1's GTPase activity and affects DNM1's interaction with AMPH. Interacts (GTP-bound form) with DNAJC6; this interaction allows clathrin-coated vesicle (CCV) formation at the plasma membrane. Phosphorylation at Ser-774 by GSK3B/GSK3-beta leads to inactivation of receptor-mediated endocytosis in non-neuronal cells. Dephosphorylation at Ser-774, through the EGFR downstream signaling, leads to activation and regulates early stages of clathrin-mediated endocytosis (CME). Phosphorylated by CDK5 leading to synaptic vesicle endocytosis (SVE) activation.

The protein resides in the cell membrane. Its subcellular location is the membrane. The protein localises to the clathrin-coated pit. It is found in the cytoplasmic vesicle. It localises to the presynapse. The protein resides in the secretory vesicle. Its subcellular location is the chromaffin granule. It catalyses the reaction GTP + H2O = GDP + phosphate + H(+). With respect to regulation, GTPase activity is activated by 1-phosphatidyl-1D-myo-inositol 4,5-bisphosphate. GTPase activity is inhibited by the heterodimer G protein formed by GNB1 and GNG2 with an IC(50)=400 nM when DNM1 concentration is 5 nM. Functionally, catalyzes the hydrolysis of GTP and utilizes this energy to mediate vesicle scission and participates in many forms of endocytosis, such as clathrin-mediated endocytosis or synaptic vesicle endocytosis as well as rapid endocytosis (RE). Associates to the membrane, through lipid binding, and self-assembles into rings and stacks of interconnected rings through oligomerization to form a helical polymer around the vesicle membrane leading to constriction of invaginated coated pits around their necks. Self-assembly of the helical polymer induces membrane tubules narrowing until the polymer reaches a length sufficient to trigger GTP hydrolysis. Depending on the curvature imposed on the tubules, membrane detachment from the helical polymer upon GTP hydrolysis can cause spontaneous hemifission followed by complete fission. May play a role in regulating early stages of clathrin-mediated endocytosis in non-neuronal cells through its activation by dephosphorylation via the signaling downstream of EGFR. Controls vesicle size at a step before fission, during formation of membrane pits, at hippocampal synapses. Controls plastic adaptation of the synaptic vesicle recycling machinery to high levels of activity. Mediates rapid endocytosis (RE), a Ca(2+)-dependent and clathrin- and K(+)-independent process in chromaffin cells. Microtubule-associated force-producing protein involved in producing microtubule bundles and able to bind and hydrolyze GTP. Through its interaction with DNAJC6, acts during the early steps of clathrin-coated vesicle (CCV) formation. This is Dynamin-1 from Homo sapiens (Human).